Reading from the N-terminus, the 338-residue chain is Nicotinate-nucleotide--dimethylbenzimidazole phosphoribosyltransferase (338 aa).

The active-site Proton acceptor is the E305.

This sequence belongs to the CobT family.

The catalysed reaction is 5,6-dimethylbenzimidazole + nicotinate beta-D-ribonucleotide = alpha-ribazole 5'-phosphate + nicotinate + H(+). It functions in the pathway nucleoside biosynthesis; alpha-ribazole biosynthesis; alpha-ribazole from 5,6-dimethylbenzimidazole: step 1/2. Its function is as follows. Catalyzes the synthesis of alpha-ribazole-5'-phosphate from nicotinate mononucleotide (NAMN) and 5,6-dimethylbenzimidazole (DMB). In Novosphingobium aromaticivorans (strain ATCC 700278 / DSM 12444 / CCUG 56034 / CIP 105152 / NBRC 16084 / F199), this protein is Nicotinate-nucleotide--dimethylbenzimidazole phosphoribosyltransferase.